We begin with the raw amino-acid sequence, 791 residues long: uncharacterized protein (791 aa).

The chain crosses the membrane as a helical span at residues L10–Y30. Basic and acidic residues predominate over residues N56–K76. The tract at residues N56 to S175 is disordered. The segment covering P77–P97 has biased composition (pro residues). The span at P98–P124 shows a compositional bias: basic and acidic residues. Residues K125–E139 show a composition bias toward pro residues.

This sequence to U.parvum UU044.

Its subcellular location is the membrane. This is an uncharacterized protein from Ureaplasma parvum serovar 3 (strain ATCC 700970).